The primary structure comprises 490 residues: GTPase Der (490 aa).

EngA-type G domains lie at 3–166 (PVVA…MEDL) and 203–376 (IKLA…DSST). GTP contacts are provided by residues 9 to 16 (GRPNVGKS), 56 to 60 (DTGGI), 118 to 121 (NKTD), 209 to 216 (GRPNVGKS), 256 to 260 (DTAGV), and 321 to 324 (NKWD). The 85-residue stretch at 377 to 461 (RRVGTSMLTR…PIRIQFKEGE (85 aa)) folds into the KH-like domain.

It belongs to the TRAFAC class TrmE-Era-EngA-EngB-Septin-like GTPase superfamily. EngA (Der) GTPase family. In terms of assembly, associates with the 50S ribosomal subunit.

Functionally, GTPase that plays an essential role in the late steps of ribosome biogenesis. The protein is GTPase Der of Escherichia coli O127:H6 (strain E2348/69 / EPEC).